Reading from the N-terminus, the 333-residue chain is Probable tRNA pseudouridine synthase B (333 aa).

Asp-66 serves as the catalytic Nucleophile. One can recognise a PUA domain in the interval 233–308 (LKKIIVKDSA…EVVEITRVIM (76 aa)).

Belongs to the pseudouridine synthase TruB family. Type 2 subfamily.

The catalysed reaction is uridine(55) in tRNA = pseudouridine(55) in tRNA. In terms of biological role, could be responsible for synthesis of pseudouridine from uracil-55 in the psi GC loop of transfer RNAs. The sequence is that of Probable tRNA pseudouridine synthase B from Methanococcus maripaludis (strain C6 / ATCC BAA-1332).